Here is a 224-residue protein sequence, read N- to C-terminus: MARYFILAAALLLTACSSTSKKPIADDPFYAPVYPEAPPTKIAATGSIYQDSQAASLYSDIRAHKVGDIITIVLKEATQAKKSAGNQIKKGSDLSLDPIYAGGSNVSIGGVPLDLRYKDSMNTKRESDADQSNSLDGSISANVMQVLNNGNLVVRGEKWISINNGDEFIRVTGIVRSQDIKPDNTIDSTRMANARIQYSGTGTFADAQKVGWLSQFFMSDWWPF.

An N-terminal signal peptide occupies residues M1 to A15. The N-palmitoyl cysteine moiety is linked to residue C16. C16 carries the S-diacylglycerol cysteine lipid modification.

The protein belongs to the FlgH family. In terms of assembly, the basal body constitutes a major portion of the flagellar organelle and consists of four rings (L,P,S, and M) mounted on a central rod.

It localises to the cell outer membrane. The protein resides in the bacterial flagellum basal body. Its function is as follows. Assembles around the rod to form the L-ring and probably protects the motor/basal body from shearing forces during rotation. The chain is Flagellar L-ring protein from Shewanella sp. (strain MR-4).